Consider the following 98-residue polypeptide: DNA-binding protein Fis (98 aa).

Residues 74 to 93 constitute a DNA-binding region (H-T-H motif); sequence QTRAALMLGINRSTLRKKLK.

The protein belongs to the transcriptional regulatory Fis family. As to quaternary structure, homodimer.

Activates ribosomal RNA transcription. Plays a direct role in upstream activation of rRNA promoters. This Buchnera aphidicola subsp. Acyrthosiphon pisum (strain 5A) protein is DNA-binding protein Fis.